Consider the following 586-residue polypeptide: CTP synthase 2 (586 aa).

Residues 300–554 (SIALVGKYTK…LAATGNLNAY (255 aa)) form the Glutamine amidotransferase type-1 domain. Catalysis depends on for GATase activity residues Cys399, His526, and Glu528. The segment at 563–586 (SSDRYSDASDDSFSEPRIAELEIS) is disordered. Ser568, Ser571, and Ser574 each carry phosphoserine.

The protein belongs to the CTP synthase family.

It carries out the reaction UTP + L-glutamine + ATP + H2O = CTP + L-glutamate + ADP + phosphate + 2 H(+). It participates in pyrimidine metabolism; CTP biosynthesis via de novo pathway; CTP from UDP: step 2/2. Functionally, catalyzes the ATP-dependent amination of UTP to CTP with either L-glutamine or ammonia as the source of nitrogen. Constitutes the rate-limiting enzyme in the synthesis of cytosine nucleotides. The polypeptide is CTP synthase 2 (CTPS2) (Homo sapiens (Human)).